The following is a 750-amino-acid chain: Cation-transporting P-type ATPase B (750 aa).

Positions 17–80 constitute an HMA domain; sequence RRIQLDVAGM…VIEQAGYRAT (64 aa). A metal cation-binding residues include Cys-28 and Cys-31. Helical transmembrane passes span 104–124, 129–149, 167–187, 200–220, 360–380, and 389–409; these read LIVAALLFVPLADLSTMFAIV, FPGWGYLLTALAAPIVTWAAW, ETLISAGILAATGWSLSTIFV, AILHSDSIYFEVAAGVTVFVL, IAAVFVPMVFVIAGLAGASWL, and AFSVVLGVLVIACPCTLGLAT. Asp-445 acts as the 4-aspartylphosphate intermediate in catalysis. A run of 6 helical transmembrane segments spans residues 471–491, 500–520, 547–567, 663–683, 693–713, and 715–735; these read VLALASAVEAASEHSVATAIV, VADFVAFAGCGVSGVVAEHHV, SRGETVVFVSVDGVACGAVAI, VAIGAADLILVRDSLGVVPVA, TIRINMIWAFGYNVAAIPIAS, and GLLNPLIAGAAMAFSSFFVVS.

It belongs to the cation transport ATPase (P-type) (TC 3.A.3) family. Type IB subfamily.

It localises to the cell membrane. It catalyses the reaction ATP + H2O = ADP + phosphate + H(+). The protein is Cation-transporting P-type ATPase B (ctpB) of Mycobacterium leprae (strain TN).